The following is a 241-amino-acid chain: 2-heptyl-1-hydroxyquinolin-4(1H)-one methyltransferase (241 aa).

Belongs to the methyltransferase superfamily. As to quaternary structure, monomer.

The protein resides in the cytoplasm. It carries out the reaction 2-heptyl-1-hydroxy-4(1H)-quinolinone + S-adenosyl-L-methionine = 2-heptyl-1-methoxy-4(1H)-quinolinone + S-adenosyl-L-homocysteine + H(+). In terms of biological role, involved in cellular response to chemical stress and may contribute to resistance toward antimicrobial natural compounds as well as drugs. Catalyzes the methylation and detoxification of the P.aeruginosa toxin 2-heptyl-1-hydroxy-4(1H)-quinolinone (HQNO) to 2-heptyl-1-methoxy-4(1H)-quinolinone (HMOQ). This is 2-heptyl-1-hydroxyquinolin-4(1H)-one methyltransferase from Mycobacterium bovis (strain BCG / Pasteur 1173P2).